The chain runs to 730 residues: Wall-associated receptor kinase-like 1 (730 aa).

Residues 1–25 (MKTKTSIFQFIVASVLTLLINDSSA) form the signal peptide. At 26-358 (ATPPPPISNS…KPTKPPVLQG (333 aa)) the chain is on the extracellular side. N-linked (GlcNAc...) asparagine glycans are attached at residues Asn-34, Asn-40, Asn-70, Asn-77, Asn-92, Asn-119, Asn-132, Asn-211, Asn-233, Asn-269, and Asn-281. The interval 282–341 (CSCEYDYFSGMSYRNCYCDYGYTGNPYLRGGCVDTDSCEGNHNCGEDAHCVNMPGPMSMC) is atypical EGF-like. Cystine bridges form between Cys-284-Cys-297, Cys-319-Cys-331, and Cys-325-Cys-341. The chain crosses the membrane as a helical span at residues 359–379 (ILIGLSGLVFFVGLFWLFKLI). Residues 380 to 730 (KKRRNINRSK…DQPMAINNKR (351 aa)) are Cytoplasmic-facing. Residues 429–702 (FSIDRVLGQG…KEVSNELERI (274 aa)) form the Protein kinase domain. Residues 435-443 (LGQGGQGTV) and Lys-457 each bind ATP. Position 502 is a phosphotyrosine (Tyr-502). Asp-554 (proton acceptor) is an active-site residue. A phosphothreonine mark is found at Thr-588 and Thr-593. Residue Tyr-601 is modified to Phosphotyrosine. Residues 685 to 730 (KGKNRPNMKEVSNELERIRSSPEDLDVRTENEDEEEDQPMAINNKR) are disordered. Residues 691-714 (NMKEVSNELERIRSSPEDLDVRTE) show a composition bias toward basic and acidic residues.

It belongs to the protein kinase superfamily. Ser/Thr protein kinase family. Preferentially expressed in roots and flowers.

The protein localises to the membrane. The enzyme catalyses L-seryl-[protein] + ATP = O-phospho-L-seryl-[protein] + ADP + H(+). It carries out the reaction L-threonyl-[protein] + ATP = O-phospho-L-threonyl-[protein] + ADP + H(+). In terms of biological role, serine/threonine-protein kinase that may function as a signaling receptor of extracellular matrix component. The sequence is that of Wall-associated receptor kinase-like 1 (WAKL1) from Arabidopsis thaliana (Mouse-ear cress).